Here is a 195-residue protein sequence, read N- to C-terminus: Putative 3-methyladenine DNA glycosylase (195 aa).

The protein belongs to the DNA glycosylase MPG family.

This Synechococcus sp. (strain JA-3-3Ab) (Cyanobacteria bacterium Yellowstone A-Prime) protein is Putative 3-methyladenine DNA glycosylase.